The primary structure comprises 105 residues: Nucleoid-associated protein lin2851 (105 aa).

Low complexity predominate over residues 1 to 16 (MRGMGNMQGMMKQMQK). Residues 1–23 (MRGMGNMQGMMKQMQKMQKEMAK) are disordered.

Belongs to the YbaB/EbfC family. In terms of assembly, homodimer.

It localises to the cytoplasm. Its subcellular location is the nucleoid. Its function is as follows. Binds to DNA and alters its conformation. May be involved in regulation of gene expression, nucleoid organization and DNA protection. The protein is Nucleoid-associated protein lin2851 of Listeria innocua serovar 6a (strain ATCC BAA-680 / CLIP 11262).